The primary structure comprises 263 residues: Homeobox protein CDX-1 (263 aa).

Residues 47 to 108 (PGINSDPHHG…VQPPGSGLLP (62 aa)) are disordered. Over residues 82–97 (SSANPTQIAFSPSDYN) the composition is skewed to polar residues. The homeobox DNA-binding region spans 150-209 (KDKYRVVYTDHQRLELEKEFHYSRYITIRRKAELAAALGLTERQVKIWFQNRRAKERKVN). An interaction with DNA region spans residues 153 to 174 (YRVVYTDHQRLELEKEFHYSRY). Residues 192–203 (RQVKIWFQNRRA) are interaction with 5-mCpG DNA. The segment covering 204-213 (KERKVNKKKM) has biased composition (basic residues). Residues 204–263 (KERKVNKKKMQQQSQQASTTTPTPPSVGTTAGMGGLCSSSSSNSNLVSPSSMPIKEEYLS) form a disordered region. Composition is skewed to low complexity over residues 214-233 (QQQS…VGTT) and 241-254 (SSSS…SPSS).

It belongs to the Caudal homeobox family.

It is found in the nucleus. Plays a role in transcriptional regulation. Involved in activated KRAS-mediated transcriptional activation of PRKD1. Binds to the PRKD1 promoter. Could play a role in the terminal differentiation of the intestine. Binds preferentially to methylated DNA. This chain is Homeobox protein CDX-1 (cdx1), found in Xenopus laevis (African clawed frog).